The chain runs to 316 residues: Pantothenate kinase (316 aa).

95–102 (GSVAVGKS) serves as a coordination point for ATP.

Belongs to the prokaryotic pantothenate kinase family.

It localises to the cytoplasm. It catalyses the reaction (R)-pantothenate + ATP = (R)-4'-phosphopantothenate + ADP + H(+). Its pathway is cofactor biosynthesis; coenzyme A biosynthesis; CoA from (R)-pantothenate: step 1/5. This is Pantothenate kinase from Shewanella baltica (strain OS195).